Here is a 268-residue protein sequence, read N- to C-terminus: Expansin-B3 (268 aa).

An N-terminal signal peptide occupies residues Met-1–Gly-25. N-linked (GlcNAc...) asparagine glycosylation is present at Asn-30. The Expansin-like EG45 domain maps to Gly-62–Leu-168. 3 disulfide bridges follow: Cys-65–Cys-93, Cys-96–Cys-163, and Cys-101–Cys-107. The Expansin-like CBD domain occupies Val-181–Ser-262. Asn-238 is a glycosylation site (N-linked (GlcNAc...) asparagine).

The protein belongs to the expansin family. Expansin B subfamily. Expressed in roots, coleoptiles and internodes.

Its subcellular location is the secreted. The protein resides in the cell wall. It is found in the membrane. In terms of biological role, may cause loosening and extension of plant cell walls by disrupting non-covalent bonding between cellulose microfibrils and matrix glucans. No enzymatic activity has been found. May be required for rapid internodal elongation in deepwater rice during submergence. The sequence is that of Expansin-B3 (EXPB3) from Oryza sativa subsp. japonica (Rice).